Reading from the N-terminus, the 283-residue chain is Bifunctional protein FolD (283 aa).

Residues 164–166 (GRS), serine 189, and isoleucine 230 each bind NADP(+).

Belongs to the tetrahydrofolate dehydrogenase/cyclohydrolase family. As to quaternary structure, homodimer.

It carries out the reaction (6R)-5,10-methylene-5,6,7,8-tetrahydrofolate + NADP(+) = (6R)-5,10-methenyltetrahydrofolate + NADPH. It catalyses the reaction (6R)-5,10-methenyltetrahydrofolate + H2O = (6R)-10-formyltetrahydrofolate + H(+). It functions in the pathway one-carbon metabolism; tetrahydrofolate interconversion. Catalyzes the oxidation of 5,10-methylenetetrahydrofolate to 5,10-methenyltetrahydrofolate and then the hydrolysis of 5,10-methenyltetrahydrofolate to 10-formyltetrahydrofolate. The chain is Bifunctional protein FolD from Lactobacillus delbrueckii subsp. bulgaricus (strain ATCC BAA-365 / Lb-18).